The following is a 158-amino-acid chain: NAD(P)H-quinone oxidoreductase subunit J, chloroplastic (158 aa).

The protein belongs to the complex I 30 kDa subunit family. As to quaternary structure, NDH is composed of at least 16 different subunits, 5 of which are encoded in the nucleus.

It is found in the plastid. The protein resides in the chloroplast thylakoid membrane. It catalyses the reaction a plastoquinone + NADH + (n+1) H(+)(in) = a plastoquinol + NAD(+) + n H(+)(out). The enzyme catalyses a plastoquinone + NADPH + (n+1) H(+)(in) = a plastoquinol + NADP(+) + n H(+)(out). In terms of biological role, NDH shuttles electrons from NAD(P)H:plastoquinone, via FMN and iron-sulfur (Fe-S) centers, to quinones in the photosynthetic chain and possibly in a chloroplast respiratory chain. The immediate electron acceptor for the enzyme in this species is believed to be plastoquinone. Couples the redox reaction to proton translocation, and thus conserves the redox energy in a proton gradient. The protein is NAD(P)H-quinone oxidoreductase subunit J, chloroplastic of Fagopyrum esculentum subsp. ancestrale (Wild buckwheat).